The sequence spans 251 residues: NADH-quinone oxidoreductase subunit B (251 aa).

Residues cysteine 38, cysteine 39, cysteine 104, and cysteine 134 each contribute to the [4Fe-4S] cluster site. The interval 208-251 is disordered; that stretch reads RKGLPPGSMTDVGWIPPEARERLKAGRGAGASGSGEREEGKEGA. A compositionally biased stretch (basic and acidic residues) spans 242–251; it reads GEREEGKEGA.

Belongs to the complex I 20 kDa subunit family. As to quaternary structure, NDH-1 is composed of 14 different subunits. Subunits NuoB, C, D, E, F, and G constitute the peripheral sector of the complex. [4Fe-4S] cluster is required as a cofactor.

The protein resides in the cell membrane. The enzyme catalyses a quinone + NADH + 5 H(+)(in) = a quinol + NAD(+) + 4 H(+)(out). NDH-1 shuttles electrons from NADH, via FMN and iron-sulfur (Fe-S) centers, to quinones in the respiratory chain. The immediate electron acceptor for the enzyme in this species is believed to be a menaquinone. Couples the redox reaction to proton translocation (for every two electrons transferred, four hydrogen ions are translocated across the cytoplasmic membrane), and thus conserves the redox energy in a proton gradient. This Rubrobacter xylanophilus (strain DSM 9941 / JCM 11954 / NBRC 16129 / PRD-1) protein is NADH-quinone oxidoreductase subunit B.